The primary structure comprises 176 residues: RNA pyrophosphohydrolase (176 aa).

The 144-residue stretch at 6-149 (GYRPNVGIVI…KRDVYRRVMK (144 aa)) folds into the Nudix hydrolase domain. Residues 38–59 (GGINPGESAEQAMYRELFEEVG) carry the Nudix box motif.

Belongs to the Nudix hydrolase family. RppH subfamily. A divalent metal cation serves as cofactor.

Its function is as follows. Accelerates the degradation of transcripts by removing pyrophosphate from the 5'-end of triphosphorylated RNA, leading to a more labile monophosphorylated state that can stimulate subsequent ribonuclease cleavage. The sequence is that of RNA pyrophosphohydrolase from Klebsiella pneumoniae (strain 342).